We begin with the raw amino-acid sequence, 467 residues long: 3-isopropylmalate dehydratase large subunit (467 aa).

[4Fe-4S] cluster contacts are provided by Cys-347, Cys-407, and Cys-410.

This sequence belongs to the aconitase/IPM isomerase family. LeuC type 1 subfamily. In terms of assembly, heterodimer of LeuC and LeuD. It depends on [4Fe-4S] cluster as a cofactor.

The enzyme catalyses (2R,3S)-3-isopropylmalate = (2S)-2-isopropylmalate. It participates in amino-acid biosynthesis; L-leucine biosynthesis; L-leucine from 3-methyl-2-oxobutanoate: step 2/4. Its function is as follows. Catalyzes the isomerization between 2-isopropylmalate and 3-isopropylmalate, via the formation of 2-isopropylmaleate. The sequence is that of 3-isopropylmalate dehydratase large subunit from Picosynechococcus sp. (strain ATCC 27264 / PCC 7002 / PR-6) (Agmenellum quadruplicatum).